Consider the following 670-residue polypeptide: Transketolase (670 aa).

Position 31 (His31) interacts with substrate. Residues His71 and 120 to 122 (GPL) contribute to the thiamine diphosphate site. Asp161 contacts Mg(2+). Gly162 and Asn191 together coordinate thiamine diphosphate. Positions 191 and 193 each coordinate Mg(2+). Substrate is bound by residues His268, Arg362, and Ser389. His268 serves as a coordination point for thiamine diphosphate. Catalysis depends on Glu416, which acts as the Proton donor. Phe443 lines the thiamine diphosphate pocket. Residues His467, Asp475, and Arg528 each contribute to the substrate site.

As to quaternary structure, homodimer. Mg(2+) serves as cofactor. Ca(2+) is required as a cofactor. It depends on Mn(2+) as a cofactor. Requires Co(2+) as cofactor. The cofactor is thiamine diphosphate.

The catalysed reaction is D-sedoheptulose 7-phosphate + D-glyceraldehyde 3-phosphate = aldehydo-D-ribose 5-phosphate + D-xylulose 5-phosphate. Functionally, catalyzes the transfer of a two-carbon ketol group from a ketose donor to an aldose acceptor, via a covalent intermediate with the cofactor thiamine pyrophosphate. This is Transketolase (tkt) from Nostoc sp. (strain PCC 7120 / SAG 25.82 / UTEX 2576).